The chain runs to 1390 residues: DNA-directed RNA polymerase III subunit RPC1 (1390 aa).

Residues Cys-69, Cys-72, Cys-79, His-82, Cys-109, and Cys-112 each coordinate Zn(2+). Residue Lys-144 coordinates DNA. Zn(2+)-binding residues include Cys-156 and Cys-159. DNA contacts are provided by Lys-167, Ser-326, Lys-348, Arg-353, Arg-360, and Arg-366. Residue Lys-445 is modified to N6-acetyllysine. Residue Arg-464 participates in RNA binding. Positions 499, 501, and 503 each coordinate Mg(2+). Asp-503 serves as a coordination point for RNA. Positions 843–884 (TPTEFFFHTMAGREGLVDTAVKTAETGYMQRRLVKSLEDLCS) are bridging helix. The trigger loop stretch occupies residues 1029 to 1070 (PGSAVGALCAQSIGEPGTQMTLKTFHFAGVASMNITLGVPRI). Residues Arg-1159, Arg-1305, and Lys-1323 each coordinate DNA.

This sequence belongs to the RNA polymerase beta' chain family. As to quaternary structure, component of the RNA polymerase III (Pol III) (Pol III) complex consisting of 17 subunits: a ten-subunit catalytic core composed of POLR3A/RPC1, POLR3B/RPC2, POLR1C/RPAC1, POLR1D/RPAC2, POLR3K/RPC10, POLR2E/RPABC1, POLR2F/RPABC2, POLR2H/RPABC3, POLR2K/RPABC4 and POLR2L/RPABC5; a mobile stalk composed of two subunits POLR3H/RPC8 and CRCP/RPC9, protruding from the core and functioning primarily in transcription initiation; and additional subunits homologous to general transcription factors of the RNA polymerase II machinery, POLR3C/RPC3-POLR3F/RPC6-POLR3G/RPC7 heterotrimer required for transcription initiation and POLR3D/RPC4-POLR3E/RPC5 heterodimer involved in both transcription initiation and termination. Pol III exists as two alternative complexes defined by the mutually exclusive incorporation of subunit POLR3G/RPC7alpha or POLR3GL/RPC7beta. The presence of POLR3G/RPC7alpha or POLR3GL/RPC7beta differentially modulates the transcription potential of Pol III, with POLR3G/RPC7alpha specifically associated with transcription of snaR-A non-coding RNAs. As part of the RNA polymerase III complex, interacts with PKP2. Mg(2+) is required as a cofactor. In terms of tissue distribution, expressed in the brain, in the cortex and the white matter (at protein level).

It localises to the nucleus. The protein resides in the cytoplasm. The protein localises to the cytosol. It carries out the reaction RNA(n) + a ribonucleoside 5'-triphosphate = RNA(n+1) + diphosphate. In terms of biological role, catalytic core component of RNA polymerase III (Pol III), a DNA-dependent RNA polymerase which synthesizes small non-coding RNAs using the four ribonucleoside triphosphates as substrates. Synthesizes 5S rRNA, snRNAs, tRNAs and miRNAs from at least 500 distinct genomic loci. Pol III-mediated transcription cycle proceeds through transcription initiation, transcription elongation and transcription termination stages. During transcription initiation, Pol III is recruited to DNA promoters type I, II or III with the help of general transcription factors and other specific initiation factors. Once the polymerase has escaped from the promoter it enters the elongation phase during which RNA is actively polymerized, based on complementarity with the template DNA strand. Transcription termination involves the release of the RNA transcript and polymerase from the DNA. Forms Pol III active center together with the second largest subunit POLR3B/RPC2. Appends one nucleotide at a time to the 3' end of the nascent RNA, with POLR3A/RPC1 contributing a Mg(2+)-coordinating DxDGD motif, and POLR3B/RPC2 participating in the coordination of a second Mg(2+) ion and providing lysine residues believed to facilitate Watson-Crick base pairing between the incoming nucleotide and template base. Typically, Mg(2+) ions direct a 5' nucleoside triphosphate to form a phosphodiester bond with the 3' hydroxyl of the preceding nucleotide of the nascent RNA, with the elimination of pyrophosphate. Pol III plays a key role in sensing and limiting infection by intracellular bacteria and DNA viruses. Acts as a nuclear and cytosolic DNA sensor involved in innate immune response. Can sense non-self dsDNA that serves as template for transcription into dsRNA. The non-self RNA polymerase III transcripts, such as Epstein-Barr virus-encoded RNAs (EBERs) induce type I interferon and NF-kappa-B through the RIG-I pathway. The protein is DNA-directed RNA polymerase III subunit RPC1 of Homo sapiens (Human).